Here is a 363-residue protein sequence, read N- to C-terminus: Cobalt-precorrin-5B C(1)-methyltransferase (363 aa).

This sequence belongs to the CbiD family.

It carries out the reaction Co-precorrin-5B + S-adenosyl-L-methionine = Co-precorrin-6A + S-adenosyl-L-homocysteine. The protein operates within cofactor biosynthesis; adenosylcobalamin biosynthesis; cob(II)yrinate a,c-diamide from sirohydrochlorin (anaerobic route): step 6/10. Functionally, catalyzes the methylation of C-1 in cobalt-precorrin-5B to form cobalt-precorrin-6A. This is Cobalt-precorrin-5B C(1)-methyltransferase from Burkholderia mallei (strain ATCC 23344).